The sequence spans 311 residues: Ferrochelatase (311 aa).

Fe cation is bound by residues His179 and Glu260.

It belongs to the ferrochelatase family.

It is found in the cytoplasm. It carries out the reaction heme b + 2 H(+) = protoporphyrin IX + Fe(2+). Its pathway is porphyrin-containing compound metabolism; protoheme biosynthesis; protoheme from protoporphyrin-IX: step 1/1. Catalyzes the ferrous insertion into protoporphyrin IX. The polypeptide is Ferrochelatase (Helicobacter hepaticus (strain ATCC 51449 / 3B1)).